The primary structure comprises 443 residues: tRNA modification GTPase MnmE (443 aa).

The (6S)-5-formyl-5,6,7,8-tetrahydrofolate site is built by Arg23, Glu82, and Lys121. Residues Gly215–Gln364 enclose the TrmE-type G domain. K(+) is bound at residue Asn225. Residues Asn225–Ser230, Thr244–Thr250, and Asp269–Gly272 contribute to the GTP site. Ser229 contacts Mg(2+). 3 residues coordinate K(+): Thr244, Ile246, and Thr249. Thr250 contributes to the Mg(2+) binding site. Residue Lys443 coordinates (6S)-5-formyl-5,6,7,8-tetrahydrofolate.

This sequence belongs to the TRAFAC class TrmE-Era-EngA-EngB-Septin-like GTPase superfamily. TrmE GTPase family. In terms of assembly, homodimer. Heterotetramer of two MnmE and two MnmG subunits. It depends on K(+) as a cofactor.

It localises to the cytoplasm. In terms of biological role, exhibits a very high intrinsic GTPase hydrolysis rate. Involved in the addition of a carboxymethylaminomethyl (cmnm) group at the wobble position (U34) of certain tRNAs, forming tRNA-cmnm(5)s(2)U34. The chain is tRNA modification GTPase MnmE from Chlamydia abortus (strain DSM 27085 / S26/3) (Chlamydophila abortus).